We begin with the raw amino-acid sequence, 315 residues long: 4-hydroxy-3-methylbut-2-enyl diphosphate reductase (315 aa).

Residue C12 coordinates [4Fe-4S] cluster. (2E)-4-hydroxy-3-methylbut-2-enyl diphosphate contacts are provided by H41 and H74. 2 residues coordinate dimethylallyl diphosphate: H41 and H74. Residues H41 and H74 each contribute to the isopentenyl diphosphate site. Residue C96 participates in [4Fe-4S] cluster binding. A (2E)-4-hydroxy-3-methylbut-2-enyl diphosphate-binding site is contributed by H124. H124 is a dimethylallyl diphosphate binding site. H124 provides a ligand contact to isopentenyl diphosphate. The Proton donor role is filled by E126. T168 contributes to the (2E)-4-hydroxy-3-methylbut-2-enyl diphosphate binding site. Position 198 (C198) interacts with [4Fe-4S] cluster. S226, S227, N228, and S270 together coordinate (2E)-4-hydroxy-3-methylbut-2-enyl diphosphate. Residues S226, S227, N228, and S270 each contribute to the dimethylallyl diphosphate site. Isopentenyl diphosphate contacts are provided by S226, S227, N228, and S270.

The protein belongs to the IspH family. [4Fe-4S] cluster is required as a cofactor.

The catalysed reaction is isopentenyl diphosphate + 2 oxidized [2Fe-2S]-[ferredoxin] + H2O = (2E)-4-hydroxy-3-methylbut-2-enyl diphosphate + 2 reduced [2Fe-2S]-[ferredoxin] + 2 H(+). It carries out the reaction dimethylallyl diphosphate + 2 oxidized [2Fe-2S]-[ferredoxin] + H2O = (2E)-4-hydroxy-3-methylbut-2-enyl diphosphate + 2 reduced [2Fe-2S]-[ferredoxin] + 2 H(+). The protein operates within isoprenoid biosynthesis; dimethylallyl diphosphate biosynthesis; dimethylallyl diphosphate from (2E)-4-hydroxy-3-methylbutenyl diphosphate: step 1/1. It functions in the pathway isoprenoid biosynthesis; isopentenyl diphosphate biosynthesis via DXP pathway; isopentenyl diphosphate from 1-deoxy-D-xylulose 5-phosphate: step 6/6. Functionally, catalyzes the conversion of 1-hydroxy-2-methyl-2-(E)-butenyl 4-diphosphate (HMBPP) into a mixture of isopentenyl diphosphate (IPP) and dimethylallyl diphosphate (DMAPP). Acts in the terminal step of the DOXP/MEP pathway for isoprenoid precursor biosynthesis. This Pseudomonas syringae pv. tomato (strain ATCC BAA-871 / DC3000) protein is 4-hydroxy-3-methylbut-2-enyl diphosphate reductase.